Reading from the N-terminus, the 253-residue chain is Acidic 26 kDa endochitinase (253 aa).

A signal peptide spans 1–24 (MKFNIVSPVALSCLFFLFLTGTLA). Glu-92 acts as the Proton donor in catalysis. The cysteines at positions 212 and 244 are disulfide-linked.

It belongs to the glycosyl hydrolase 19 family. Chitinase class II subfamily.

The protein resides in the secreted. It localises to the extracellular space. The enzyme catalyses Random endo-hydrolysis of N-acetyl-beta-D-glucosaminide (1-&gt;4)-beta-linkages in chitin and chitodextrins.. Functionally, defense against chitin-containing fungal pathogens. This is Acidic 26 kDa endochitinase (CHI3) from Solanum lycopersicum (Tomato).